The sequence spans 249 residues: Segregation and condensation protein A (249 aa).

Belongs to the ScpA family. As to quaternary structure, component of a cohesin-like complex composed of ScpA, ScpB and the Smc homodimer, in which ScpA and ScpB bind to the head domain of Smc. The presence of the three proteins is required for the association of the complex with DNA.

The protein resides in the cytoplasm. Participates in chromosomal partition during cell division. May act via the formation of a condensin-like complex containing Smc and ScpB that pull DNA away from mid-cell into both cell halves. The polypeptide is Segregation and condensation protein A (Mycoplasmopsis pulmonis (strain UAB CTIP) (Mycoplasma pulmonis)).